A 503-amino-acid polypeptide reads, in one-letter code: Cytochrome P450 3A12 (503 aa).

Position 442 (cysteine 442) interacts with heme.

This sequence belongs to the cytochrome P450 family. The cofactor is heme.

The protein localises to the endoplasmic reticulum membrane. It is found in the microsome membrane. It catalyses the reaction an organic molecule + reduced [NADPH--hemoprotein reductase] + O2 = an alcohol + oxidized [NADPH--hemoprotein reductase] + H2O + H(+). In terms of biological role, cytochromes P450 are a group of heme-thiolate monooxygenases. In liver microsomes, this enzyme is involved in an NADPH-dependent electron transport pathway. It oxidizes a variety of structurally unrelated compounds, including steroids, fatty acids, and xenobiotics. The protein is Cytochrome P450 3A12 (CYP3A12) of Canis lupus familiaris (Dog).